The chain runs to 561 residues: Eukaryotic translation initiation factor 3 subunit D-1 (561 aa).

Residues 98–164 (VQKPPHQRGR…RGPPPKMRES (67 aa)) are disordered. Residues 100–121 (KPPHQRGRFRNMRNSRSGRGRN) are compositionally biased toward basic residues. A Phosphothreonine modification is found at T128. Residues 289-303 (EFDLLTVNETSVEPP) form an RNA gate region.

Belongs to the eIF-3 subunit D family. In terms of assembly, component of the eukaryotic translation initiation factor 3 (eIF-3) complex. The eIF-3 complex interacts with pix.

The protein resides in the cytoplasm. Its function is as follows. mRNA cap-binding component of the eukaryotic translation initiation factor 3 (eIF-3) complex, which is involved in protein synthesis of a specialized repertoire of mRNAs and, together with other initiation factors, stimulates binding of mRNA and methionyl-tRNAi to the 40S ribosome. The eIF-3 complex specifically targets and initiates translation of a subset of mRNAs involved in cell proliferation. In the eIF-3 complex, eif3d specifically recognizes and binds the 7-methylguanosine cap of a subset of mRNAs. The sequence is that of Eukaryotic translation initiation factor 3 subunit D-1 from Drosophila ananassae (Fruit fly).